A 455-amino-acid chain; its full sequence is Bifunctional protein GlmU (455 aa).

The segment at 1–230 (MANRFAVILA…FDETIGINDR (230 aa)) is pyrophosphorylase. UDP-N-acetyl-alpha-D-glucosamine contacts are provided by residues 9–12 (LAAG), Lys-23, Gln-73, and 78–79 (GT). Asp-103 is a Mg(2+) binding site. UDP-N-acetyl-alpha-D-glucosamine is bound by residues Gly-140, Glu-155, Asn-170, and Asn-228. Mg(2+) is bound at residue Asn-228. The tract at residues 231–251 (IALAEAEKIMKKRINEQHMRN) is linker. Residues 252-455 (GVSIIDPEQT…KEEYASKFKK (204 aa)) are N-acetyltransferase. UDP-N-acetyl-alpha-D-glucosamine is bound by residues Arg-333 and Lys-351. The Proton acceptor role is filled by His-363. Positions 366 and 377 each coordinate UDP-N-acetyl-alpha-D-glucosamine. Acetyl-CoA contacts are provided by residues 386-387 (NY), Ala-423, and Arg-440.

In the N-terminal section; belongs to the N-acetylglucosamine-1-phosphate uridyltransferase family. This sequence in the C-terminal section; belongs to the transferase hexapeptide repeat family. In terms of assembly, homotrimer. Mg(2+) is required as a cofactor.

Its subcellular location is the cytoplasm. It carries out the reaction alpha-D-glucosamine 1-phosphate + acetyl-CoA = N-acetyl-alpha-D-glucosamine 1-phosphate + CoA + H(+). The catalysed reaction is N-acetyl-alpha-D-glucosamine 1-phosphate + UTP + H(+) = UDP-N-acetyl-alpha-D-glucosamine + diphosphate. Its pathway is nucleotide-sugar biosynthesis; UDP-N-acetyl-alpha-D-glucosamine biosynthesis; N-acetyl-alpha-D-glucosamine 1-phosphate from alpha-D-glucosamine 6-phosphate (route II): step 2/2. The protein operates within nucleotide-sugar biosynthesis; UDP-N-acetyl-alpha-D-glucosamine biosynthesis; UDP-N-acetyl-alpha-D-glucosamine from N-acetyl-alpha-D-glucosamine 1-phosphate: step 1/1. It participates in bacterial outer membrane biogenesis; LPS lipid A biosynthesis. Functionally, catalyzes the last two sequential reactions in the de novo biosynthetic pathway for UDP-N-acetylglucosamine (UDP-GlcNAc). The C-terminal domain catalyzes the transfer of acetyl group from acetyl coenzyme A to glucosamine-1-phosphate (GlcN-1-P) to produce N-acetylglucosamine-1-phosphate (GlcNAc-1-P), which is converted into UDP-GlcNAc by the transfer of uridine 5-monophosphate (from uridine 5-triphosphate), a reaction catalyzed by the N-terminal domain. This chain is Bifunctional protein GlmU, found in Oceanobacillus iheyensis (strain DSM 14371 / CIP 107618 / JCM 11309 / KCTC 3954 / HTE831).